The primary structure comprises 322 residues: 4-hydroxythreonine-4-phosphate dehydrogenase (322 aa).

Residue Thr-132 participates in substrate binding. 3 residues coordinate a divalent metal cation: His-160, His-205, and His-260. Substrate is bound by residues Lys-268, Asn-277, and Arg-286.

Belongs to the PdxA family. Homodimer. It depends on Zn(2+) as a cofactor. Mg(2+) serves as cofactor. Requires Co(2+) as cofactor.

Its subcellular location is the cytoplasm. The catalysed reaction is 4-(phosphooxy)-L-threonine + NAD(+) = 3-amino-2-oxopropyl phosphate + CO2 + NADH. Its pathway is cofactor biosynthesis; pyridoxine 5'-phosphate biosynthesis; pyridoxine 5'-phosphate from D-erythrose 4-phosphate: step 4/5. Its function is as follows. Catalyzes the NAD(P)-dependent oxidation of 4-(phosphooxy)-L-threonine (HTP) into 2-amino-3-oxo-4-(phosphooxy)butyric acid which spontaneously decarboxylates to form 3-amino-2-oxopropyl phosphate (AHAP). The protein is 4-hydroxythreonine-4-phosphate dehydrogenase of Xanthomonas campestris pv. campestris (strain 8004).